The following is a 122-amino-acid chain: uncharacterized protein (122 aa).

This is an uncharacterized protein from Arabidopsis thaliana (Mouse-ear cress).